A 556-amino-acid chain; its full sequence is Formate--tetrahydrofolate ligase (556 aa).

65 to 72 contributes to the ATP binding site; that stretch reads TPAGEGKS.

The protein belongs to the formate--tetrahydrofolate ligase family.

It catalyses the reaction (6S)-5,6,7,8-tetrahydrofolate + formate + ATP = (6R)-10-formyltetrahydrofolate + ADP + phosphate. It participates in one-carbon metabolism; tetrahydrofolate interconversion. In Streptococcus thermophilus (strain ATCC BAA-491 / LMD-9), this protein is Formate--tetrahydrofolate ligase.